A 392-amino-acid polypeptide reads, in one-letter code: Formate-dependent phosphoribosylglycinamide formyltransferase (392 aa).

N(1)-(5-phospho-beta-D-ribosyl)glycinamide is bound by residues 15-16 and Glu-75; that span reads EL. ATP is bound by residues Arg-107, Lys-148, 153–158, 188–191, and Glu-196; these read SSGKGQ and EEFL. An ATP-grasp domain is found at 112–302; sequence DLAAGELNLR…EFELHLRAVL (191 aa). Positions 261 and 273 each coordinate Mg(2+). N(1)-(5-phospho-beta-D-ribosyl)glycinamide contacts are provided by residues Asp-280, Lys-350, and 357–358; that span reads RR.

The protein belongs to the PurK/PurT family. In terms of assembly, homodimer.

It catalyses the reaction N(1)-(5-phospho-beta-D-ribosyl)glycinamide + formate + ATP = N(2)-formyl-N(1)-(5-phospho-beta-D-ribosyl)glycinamide + ADP + phosphate + H(+). The protein operates within purine metabolism; IMP biosynthesis via de novo pathway; N(2)-formyl-N(1)-(5-phospho-D-ribosyl)glycinamide from N(1)-(5-phospho-D-ribosyl)glycinamide (formate route): step 1/1. In terms of biological role, involved in the de novo purine biosynthesis. Catalyzes the transfer of formate to 5-phospho-ribosyl-glycinamide (GAR), producing 5-phospho-ribosyl-N-formylglycinamide (FGAR). Formate is provided by PurU via hydrolysis of 10-formyl-tetrahydrofolate. This is Formate-dependent phosphoribosylglycinamide formyltransferase from Synechococcus sp. (strain CC9605).